The primary structure comprises 393 residues: Serpin-Z4 (393 aa).

Residues 342-366 (GTEAAAVSVASMTKDMLLMGDFVAD) form an RCL region.

Belongs to the serpin family.

Probable serine protease inhibitor. This Arabidopsis thaliana (Mouse-ear cress) protein is Serpin-Z4.